A 258-amino-acid chain; its full sequence is Type II restriction enzyme HincII (258 aa).

It catalyses the reaction Endonucleolytic cleavage of DNA to give specific double-stranded fragments with terminal 5'-phosphates.. A P subtype restriction enzyme that recognizes the double-stranded sequence 5'-GTYRAC-3' and cleaves after Y-3. This chain is Type II restriction enzyme HincII (hincIIR), found in Haemophilus influenzae.